Consider the following 80-residue polypeptide: Kappa-actitoxin-Avd4i (80 aa).

The signal sequence occupies residues 1–19; the sequence is MNKALFLCLVVLCAAVVFA. A propeptide spanning residues 20–31 is cleaved from the precursor; that stretch reads AEDLQKAKHAPF. Cystine bridges form between C41/C76, C43/C69, and C59/C77.

The protein belongs to the sea anemone type 3 (BDS) potassium channel toxin family. As to expression, weakly expressed in the ectodermal tissue from the distal and proximal tentacles, body wall, and oral disk.

Its subcellular location is the secreted. It localises to the nematocyst. Its function is as follows. Blocks Kv3 voltage-gated potassium channels. Reduces blood pressure. This Anemonia viridis (Snakelocks anemone) protein is Kappa-actitoxin-Avd4i.